We begin with the raw amino-acid sequence, 146 residues long: Large ribosomal subunit protein uL15 (146 aa).

Basic and acidic residues predominate over residues M1–R13. The segment at M1–M55 is disordered. A compositionally biased stretch (gly residues) spans T23–Q35.

It belongs to the universal ribosomal protein uL15 family. As to quaternary structure, part of the 50S ribosomal subunit.

Binds to the 23S rRNA. The protein is Large ribosomal subunit protein uL15 of Lactobacillus acidophilus (strain ATCC 700396 / NCK56 / N2 / NCFM).